Here is a 63-residue protein sequence, read N- to C-terminus: Large ribosomal subunit protein uL29 (63 aa).

The protein belongs to the universal ribosomal protein uL29 family.

The chain is Large ribosomal subunit protein uL29 from Bacillus cereus (strain ATCC 14579 / DSM 31 / CCUG 7414 / JCM 2152 / NBRC 15305 / NCIMB 9373 / NCTC 2599 / NRRL B-3711).